We begin with the raw amino-acid sequence, 361 residues long: MDNVMAQLESLEVRYEEIQEMMADPEVIADTKRYMEITKEEADMREVVQKFRKFKADKEEIAGNKEIIADGSDPELVEMAKMENSELEDEISQLEDEIKILMLPKDPNDDKDIIMEIRGAAGGDEASLFAGDLLRMYEKYAENQGWNVSIVDSEQTEVGGYKRAAIMITGNKVYSKLKYENGAHRVQRIPVTESAGRVHTSTATVAVMPEYEQVDIDLDPKEIRVDVYRSSGAGGQHINKTSSAVRMTHLPTGIVVAMQDQRSQQQNRAKAMEILKSRVYDYYESQNRDKYDAKRKNAVGTGDRSERIRTYNYPQNRVTDHRIGLTLNKLDRIMNGELDEVIDALTVYYQTKQLEELAENA.

At glutamine 236 the chain carries N5-methylglutamine.

Belongs to the prokaryotic/mitochondrial release factor family. Methylated by PrmC. Methylation increases the termination efficiency of RF1.

It localises to the cytoplasm. Its function is as follows. Peptide chain release factor 1 directs the termination of translation in response to the peptide chain termination codons UAG and UAA. This chain is Peptide chain release factor 1, found in Lactobacillus delbrueckii subsp. bulgaricus (strain ATCC 11842 / DSM 20081 / BCRC 10696 / JCM 1002 / NBRC 13953 / NCIMB 11778 / NCTC 12712 / WDCM 00102 / Lb 14).